The chain runs to 658 residues: Transcription factor cep-1 (658 aa).

Residues 238 to 428 mediate DNA binding; it reads EEWLTFEVKK…RDWKNFCEKR (191 aa). Residues C319, H322, C375, and C379 each coordinate Zn(2+). The segment at 450 to 477 is disordered; that stretch reads QSSLHSGPSSPEKVTDTSQMFQSTSSSS. Positions 466–476 are enriched in low complexity; sequence TSQMFQSTSSS. Residues 535–564 are required for tertiary structure stability of the protein; that stretch reads QYGLQRQVKLSEKEYSKFVAFFAKEGENEI.

Belongs to the p53 family. In terms of assembly, homodimer. Interacts (via C-terminus domain) with prmt-5; not methylated by prmt-5. Interacts with cbp-1 (via HAT domain); cep-1 transcriptional activity may be inhibited by interaction with methylated cbp-1. Component of a complex that contains prmt-5 and cbp-1. Interacts with ape-1; the interaction inhibits pro-apoptotic activity of cep-1. It depends on Zn(2+) as a cofactor. Phosphorylated in response to IR-induced DNA damage which is thought to be mediated by akt-1.

Its subcellular location is the nucleus. Functionally, transcriptional activator that binds the same DNA consensus sequence as p53. Has a role in normal development to ensure proper meiotic chromosome segregation. Promotes apoptosis under conditions of cellular and genotoxic stress in response to DNA damage, hypoxia, or starvation. However, not required for DNA repair in response to UV-C or to regulate cell-cycle progression. Regulates germline apoptosis in response to DNA damage. Required for induction of ced-13 in response to DNA damage. Its pro-apoptotic activity is inhibited when bound to ape-1 in vitro. Regulates germline proliferation by activating phg-1. Regulates DNA damage-induced apoptosis by inducing transcription of the programmed cell death activator egl-1. Negatively regulates lifespan. The protein is Transcription factor cep-1 of Caenorhabditis briggsae.